The chain runs to 427 residues: Adenylosuccinate synthetase (427 aa).

GTP contacts are provided by residues 12 to 18 and 40 to 42; these read GDEGKGK and GHT. Aspartate 13 acts as the Proton acceptor in catalysis. Aspartate 13 and glycine 40 together coordinate Mg(2+). IMP-binding positions include 13–16, 38–41, threonine 128, arginine 142, glutamine 223, threonine 238, and arginine 302; these read DEGK and NAGH. Histidine 41 (proton donor) is an active-site residue. 298–304 is a binding site for substrate; it reads TTTGRPR. GTP is bound by residues arginine 304, 330–332, and 412–414; these read LLD and SVG.

The protein belongs to the adenylosuccinate synthetase family. Homodimer. Requires Mg(2+) as cofactor.

It is found in the cytoplasm. The catalysed reaction is IMP + L-aspartate + GTP = N(6)-(1,2-dicarboxyethyl)-AMP + GDP + phosphate + 2 H(+). The protein operates within purine metabolism; AMP biosynthesis via de novo pathway; AMP from IMP: step 1/2. Its function is as follows. Plays an important role in the de novo pathway of purine nucleotide biosynthesis. Catalyzes the first committed step in the biosynthesis of AMP from IMP. The polypeptide is Adenylosuccinate synthetase (Alkaliphilus metalliredigens (strain QYMF)).